We begin with the raw amino-acid sequence, 239 residues long: Fatty acid metabolism regulator protein (239 aa).

Residues 6–74 form the HTH gntR-type domain; the sequence is QSPAGFAEEY…HGKPTKVNNF (69 aa). Positions 34–53 form a DNA-binding region, H-T-H motif; it reads ERELSELIGVTRTTLREVLQ.

Homodimer.

Its subcellular location is the cytoplasm. Its function is as follows. Multifunctional regulator of fatty acid metabolism. This Cronobacter sakazakii (strain ATCC BAA-894) (Enterobacter sakazakii) protein is Fatty acid metabolism regulator protein.